Consider the following 45-residue polypeptide: Caltrin-like protein 1 (45 aa).

Positions 8–45 (DSDRPNCSRYVQHLYMCTKELDPVCGTDGHTYGNRSIF) constitute a Kazal-like domain. N-linked (GlcNAc...) asparagine glycosylation is found at Asn-13 and Asn-41.

In terms of processing, glycosylated.

It localises to the secreted. Functionally, inhibits calcium transport into spermatozoa. This Cavia porcellus (Guinea pig) protein is Caltrin-like protein 1.